Here is a 213-residue protein sequence, read N- to C-terminus: Uridine kinase (213 aa).

ATP is bound at residue Gly15–Ser22.

This sequence belongs to the uridine kinase family.

The protein resides in the cytoplasm. The catalysed reaction is uridine + ATP = UMP + ADP + H(+). It carries out the reaction cytidine + ATP = CMP + ADP + H(+). It functions in the pathway pyrimidine metabolism; CTP biosynthesis via salvage pathway; CTP from cytidine: step 1/3. It participates in pyrimidine metabolism; UMP biosynthesis via salvage pathway; UMP from uridine: step 1/1. The protein is Uridine kinase of Serratia proteamaculans (strain 568).